A 329-amino-acid polypeptide reads, in one-letter code: Short-chain dehydrogenase/reductase prx4 (329 aa).

NADP(+) is bound by residues serine 58, isoleucine 60, and asparagine 81. N-linked (GlcNAc...) asparagine glycosylation is present at asparagine 91. Positions 98, 121, 161, 194, 198, and 229 each coordinate NADP(+). Tyrosine 194 (proton acceptor) is an active-site residue. Lysine 198 acts as the Lowers pKa of active site Tyr in catalysis. The helical transmembrane segment at 238 to 258 (GPLMAAGLPVSSAHMVGLAVV) threads the bilayer.

Belongs to the short-chain dehydrogenases/reductases (SDR) family.

Its subcellular location is the membrane. The protein operates within sesquiterpene biosynthesis. Functionally, short-chain dehydrogenase/reductase; part of the gene cluster that mediates the biosynthesis of PR-toxin, a bicyclic sesquiterpene belonging to the eremophilane class and acting as a mycotoxin. The first step of the pathway is catalyzed by the aristolochene synthase which performs the cyclization of trans,trans-farnesyl diphosphate (FPP) to the bicyclic sesquiterpene aristolochene. Following the formation of aristolochene, the non-oxygenated aristolochene is converted to the trioxygenated intermediate eremofortin B, via 7-epi-neopetasone. This conversion appears to involve three enzymes, a hydroxysterol oxidase-like enzyme, the quinone-oxidase prx3 that forms the quinone-type-structure in the bicyclic nucleus of aristolochene with the C8-oxo group and the C-3 hydroxyl group, and the P450 monooxygenase ORF6 that introduces the epoxide at the double bond between carbons 1 and 2. No monoxy or dioxy-intermediates have been reported to be released to the broth, so these three early oxidative reactions may be coupled together. Eremofortin B is further oxidized by another P450 monooxygenase, that introduces a second epoxide between carbons 7 and 11 prior to acetylation to eremofortin A by the acetyltransferase ORF8. The second epoxidation may be performed by a second P450 monooxygenase. After the acetylation step, eremofortin A is converted to eremofortin C and then to PR-toxin. First the conversion of eremofortin A to eremofortin C proceeds by oxidation of the side chain of the molecule at C-12 and is catalyzed by the short-chain oxidoreductase prx1. The cytochrome P450 monooxygenase ORF6 is probably also involved in this step. The primary alcohol formed at C-12 is finally oxidized by the short-chain alcohol dehydrogenase prx4 that forms PR-toxin. The polypeptide is Short-chain dehydrogenase/reductase prx4 (Penicillium roqueforti).